The primary structure comprises 355 residues: UDP-N-acetylglucosamine--N-acetylmuramyl-(pentapeptide) pyrophosphoryl-undecaprenol N-acetylglucosamine transferase (355 aa).

Residues 12 to 14 (TGG), asparagine 124, arginine 160, serine 192, isoleucine 243, 262 to 267 (ALTVCE), and glutamine 287 contribute to the UDP-N-acetyl-alpha-D-glucosamine site.

It belongs to the glycosyltransferase 28 family. MurG subfamily.

The protein resides in the cell inner membrane. It catalyses the reaction di-trans,octa-cis-undecaprenyl diphospho-N-acetyl-alpha-D-muramoyl-L-alanyl-D-glutamyl-meso-2,6-diaminopimeloyl-D-alanyl-D-alanine + UDP-N-acetyl-alpha-D-glucosamine = di-trans,octa-cis-undecaprenyl diphospho-[N-acetyl-alpha-D-glucosaminyl-(1-&gt;4)]-N-acetyl-alpha-D-muramoyl-L-alanyl-D-glutamyl-meso-2,6-diaminopimeloyl-D-alanyl-D-alanine + UDP + H(+). It functions in the pathway cell wall biogenesis; peptidoglycan biosynthesis. Cell wall formation. Catalyzes the transfer of a GlcNAc subunit on undecaprenyl-pyrophosphoryl-MurNAc-pentapeptide (lipid intermediate I) to form undecaprenyl-pyrophosphoryl-MurNAc-(pentapeptide)GlcNAc (lipid intermediate II). This is UDP-N-acetylglucosamine--N-acetylmuramyl-(pentapeptide) pyrophosphoryl-undecaprenol N-acetylglucosamine transferase from Haemophilus ducreyi (strain 35000HP / ATCC 700724).